The following is a 102-amino-acid chain: Small ribosomal subunit protein uS10 (102 aa).

Belongs to the universal ribosomal protein uS10 family. In terms of assembly, part of the 30S ribosomal subunit.

Its function is as follows. Involved in the binding of tRNA to the ribosomes. This Methanococcus maripaludis (strain C6 / ATCC BAA-1332) protein is Small ribosomal subunit protein uS10.